The following is a 105-amino-acid chain: Heat shock protein HspQ (105 aa).

A disordered region spans residues 80-105; sequence AHPEQPSLDELAASIRHQLQAPHLRN.

This sequence belongs to the HspQ family.

It is found in the cytoplasm. Involved in the degradation of certain denaturated proteins, including DnaA, during heat shock stress. The polypeptide is Heat shock protein HspQ (Yersinia pseudotuberculosis serotype O:1b (strain IP 31758)).